Reading from the N-terminus, the 514-residue chain is Exoglucanase 1 (514 aa).

An N-terminal signal peptide occupies residues 1 to 17 (MYQKLALISAFLATARA). The catalytic stretch occupies residues 18–453 (QSACTLQAET…GSTGNSSGGN (436 aa)). 10 cysteine pairs are disulfide-bonded: Cys21–Cys89, Cys36–Cys42, Cys67–Cys88, Cys78–Cys84, Cys155–Cys414, Cys189–Cys227, Cys193–Cys226, Cys247–Cys273, Cys255–Cys260, and Cys278–Cys348. N-linked (GlcNAc...) asparagine glycosylation is found at Asn62 and Asn81. Glu229 serves as the catalytic Nucleophile. The active-site Proton donor is the Glu234. An N-linked (GlcNAc...) asparagine glycan is attached at Asn287. 2 disordered regions span residues 401–427 (NETSSTPGAVRGSCSTSSGVPAQLESN) and 444–481 (GSTGNSSGGNPPGGNPPGTTTTRRPATSTGSSPGPTQT). Residues 454 to 478 (PPGGNPPGTTTTRRPATSTGSSPGP) form a linker region. Residues 460–479 (PGTTTTRRPATSTGSSPGPT) show a composition bias toward low complexity. Residues 478 to 514 (PTQTHYGQCGGIGYSGPTVCASGSTCQVLNPYYSQCL) form the CBM1 domain. 2 disulfide bridges follow: Cys486–Cys503 and Cys497–Cys513.

Belongs to the glycosyl hydrolase 7 (cellulase C) family.

It catalyses the reaction Hydrolysis of (1-&gt;4)-beta-D-glucosidic linkages in cellulose and cellotetraose, releasing cellobiose from the non-reducing ends of the chains.. Functionally, the biological conversion of cellulose to glucose generally requires three types of hydrolytic enzymes: (1) Endoglucanases which cut internal beta-1,4-glucosidic bonds; (2) Exocellobiohydrolases that cut the disaccharide cellobiose from the non-reducing end of the cellulose polymer chain; (3) Beta-1,4-glucosidases which hydrolyze the cellobiose and other short cello-oligosaccharides to glucose. This chain is Exoglucanase 1 (cbh1), found in Hypocrea rufa (Trichoderma viride).